Consider the following 306-residue polypeptide: Bifunctional protein FolD 1 (306 aa).

NADP(+) is bound by residues 168 to 170, Ser-193, and Ile-234; that span reads GRS.

Belongs to the tetrahydrofolate dehydrogenase/cyclohydrolase family. In terms of assembly, homodimer.

The catalysed reaction is (6R)-5,10-methylene-5,6,7,8-tetrahydrofolate + NADP(+) = (6R)-5,10-methenyltetrahydrofolate + NADPH. It catalyses the reaction (6R)-5,10-methenyltetrahydrofolate + H2O = (6R)-10-formyltetrahydrofolate + H(+). It participates in one-carbon metabolism; tetrahydrofolate interconversion. Functionally, catalyzes the oxidation of 5,10-methylenetetrahydrofolate to 5,10-methenyltetrahydrofolate and then the hydrolysis of 5,10-methenyltetrahydrofolate to 10-formyltetrahydrofolate. The protein is Bifunctional protein FolD 1 of Rhizobium meliloti (strain 1021) (Ensifer meliloti).